Reading from the N-terminus, the 250-residue chain is MTNLAQKLRYGTQQSHTLAENTAYMKCFLKGIVEREPFRQLLANLYYLYSALEAALRQHRDNEIISAIYFPELNRTDKLAEDLTYYYGPNWQQIIQPTPCAKIYVDRLKTIAASEPELLIAHCYTRYLGDLSGGQSLKNIIRSALQLPEGEGTAMYEFDSLPTPGDRRQFKEIYRDVLNSLPLDEATINRIVEEANYAFSLNREVMHDLEDLIKAAIGEHTFDLLTRQDRPGSTEARSTAGHPITLMVGE.

His-16 serves as a coordination point for heme b. Residues 228–250 (QDRPGSTEARSTAGHPITLMVGE) are disordered.

This sequence belongs to the heme oxygenase family. In terms of assembly, homodimer.

It carries out the reaction heme b + 3 reduced [NADPH--hemoprotein reductase] + 3 O2 = biliverdin IXalpha + CO + Fe(2+) + 3 oxidized [NADPH--hemoprotein reductase] + 3 H2O + H(+). Functionally, catalyzes the opening of the heme ring with the release of iron. Key enzyme in the synthesis of the chromophoric part of the photosynthetic antennae. In Synechocystis sp. (strain ATCC 27184 / PCC 6803 / Kazusa), this protein is Heme oxygenase 2 (pbsA2).